We begin with the raw amino-acid sequence, 63 residues long: Cytochrome b-c1 complex subunit 9 (63 aa).

At 2-21 the chain is on the mitochondrial matrix side; sequence AAATLTSKLYSLLFRRTSTF. Residues 22 to 47 form a helical membrane-spanning segment; the sequence is ALTIIVGVMFFERAFDQGADAIYDHI. Residues 48 to 63 are Mitochondrial intermembrane-facing; it reads NEGKLWKHIKHKYENK.

The protein belongs to the UQCR10/QCR9 family. In terms of assembly, component of the ubiquinol-cytochrome c oxidoreductase (cytochrome b-c1 complex, complex III, CIII), a multisubunit enzyme composed of 11 subunits. The complex is composed of 3 respiratory subunits cytochrome b, cytochrome c1 and Rieske protein UQCRFS1, 2 core protein subunits UQCRC1/QCR1 and UQCRC2/QCR2, and 6 low-molecular weight protein subunits UQCRH/QCR6, UQCRB/QCR7, UQCRQ/QCR8, UQCR10/QCR9, UQCR11/QCR10 and subunit 9, the cleavage product of Rieske protein UQCRFS1. The complex exists as an obligatory dimer and forms supercomplexes (SCs) in the inner mitochondrial membrane with NADH-ubiquinone oxidoreductase (complex I, CI) and cytochrome c oxidase (complex IV, CIV), resulting in different assemblies (supercomplex SCI(1)III(2)IV(1) and megacomplex MCI(2)III(2)IV(2)). Interacts with STMP1.

Its subcellular location is the mitochondrion inner membrane. Functionally, component of the ubiquinol-cytochrome c oxidoreductase, a multisubunit transmembrane complex that is part of the mitochondrial electron transport chain which drives oxidative phosphorylation. The respiratory chain contains 3 multisubunit complexes succinate dehydrogenase (complex II, CII), ubiquinol-cytochrome c oxidoreductase (cytochrome b-c1 complex, complex III, CIII) and cytochrome c oxidase (complex IV, CIV), that cooperate to transfer electrons derived from NADH and succinate to molecular oxygen, creating an electrochemical gradient over the inner membrane that drives transmembrane transport and the ATP synthase. The cytochrome b-c1 complex catalyzes electron transfer from ubiquinol to cytochrome c, linking this redox reaction to translocation of protons across the mitochondrial inner membrane, with protons being carried across the membrane as hydrogens on the quinol. In the process called Q cycle, 2 protons are consumed from the matrix, 4 protons are released into the intermembrane space and 2 electrons are passed to cytochrome c. The polypeptide is Cytochrome b-c1 complex subunit 9 (UQCR10) (Homo sapiens (Human)).